The following is a 435-amino-acid chain: Islet cell autoantigen 1-like protein (435 aa).

Residues 44–247 (ASDAELDAKL…TAQMMSQIQE (204 aa)) form the AH domain. The disordered stretch occupies residues 391 to 435 (WASQEGSEHSDTLPVPSQHPKKLKYLGPLSNPDAIGHSDDELLNA). The segment covering 426 to 435 (GHSDDELLNA) has biased composition (basic and acidic residues).

The sequence is that of Islet cell autoantigen 1-like protein (Ica1l) from Rattus norvegicus (Rat).